Here is a 256-residue protein sequence, read N- to C-terminus: Triosephosphate isomerase (256 aa).

9 to 11 (NWK) contacts substrate. His-97 serves as the catalytic Electrophile. Catalysis depends on Glu-169, which acts as the Proton acceptor. Residues Gly-175, Ser-214, and 235 to 236 (GG) each bind substrate.

This sequence belongs to the triosephosphate isomerase family. As to quaternary structure, homodimer.

The protein localises to the cytoplasm. It carries out the reaction D-glyceraldehyde 3-phosphate = dihydroxyacetone phosphate. The protein operates within carbohydrate biosynthesis; gluconeogenesis. It participates in carbohydrate degradation; glycolysis; D-glyceraldehyde 3-phosphate from glycerone phosphate: step 1/1. Its function is as follows. Involved in the gluconeogenesis. Catalyzes stereospecifically the conversion of dihydroxyacetone phosphate (DHAP) to D-glyceraldehyde-3-phosphate (G3P). The protein is Triosephosphate isomerase of Vibrio vulnificus (strain CMCP6).